Reading from the N-terminus, the 132-residue chain is FPRL1 inhibitory protein (132 aa).

The N-terminal stretch at 1–28 (MKKNITKVIIASTVIATGLLTQTNDAKA) is a signal peptide.

The protein belongs to the CHIPS/FLIPr family.

It is found in the secreted. Functionally, may be involved in countering the first line of host defense mechanisms. Impairs the leukocyte response to FPRL1 agonists by binding directly to host FPRL1. In Staphylococcus aureus (strain MW2), this protein is FPRL1 inhibitory protein (flr).